The primary structure comprises 77 residues: uncharacterized protein (77 aa).

A helical membrane pass occupies residues 57-76 (NSAVICTLIANLMAFFMLLT).

It localises to the membrane. This is an uncharacterized protein from Schizosaccharomyces pombe (strain 972 / ATCC 24843) (Fission yeast).